A 472-amino-acid polypeptide reads, in one-letter code: Aspartyl/glutamyl-tRNA(Asn/Gln) amidotransferase subunit B (472 aa).

The protein belongs to the GatB/GatE family. GatB subfamily. As to quaternary structure, heterotrimer of A, B and C subunits.

It catalyses the reaction L-glutamyl-tRNA(Gln) + L-glutamine + ATP + H2O = L-glutaminyl-tRNA(Gln) + L-glutamate + ADP + phosphate + H(+). The catalysed reaction is L-aspartyl-tRNA(Asn) + L-glutamine + ATP + H2O = L-asparaginyl-tRNA(Asn) + L-glutamate + ADP + phosphate + 2 H(+). Its function is as follows. Allows the formation of correctly charged Asn-tRNA(Asn) or Gln-tRNA(Gln) through the transamidation of misacylated Asp-tRNA(Asn) or Glu-tRNA(Gln) in organisms which lack either or both of asparaginyl-tRNA or glutaminyl-tRNA synthetases. The reaction takes place in the presence of glutamine and ATP through an activated phospho-Asp-tRNA(Asn) or phospho-Glu-tRNA(Gln). This Campylobacter jejuni subsp. jejuni serotype O:6 (strain 81116 / NCTC 11828) protein is Aspartyl/glutamyl-tRNA(Asn/Gln) amidotransferase subunit B.